Here is a 538-residue protein sequence, read N- to C-terminus: MFRRNIITSAILLMAPLAFSAQSLAESLTVEQRLELLEKALRETQSELKKYKDEEKKKYTPATVNRSVSTNDQGYAANPFPTSRAAKPDAVLVKNEEKNASETGSIYSSMTLKDFSKFVKDEIGFSYNGYYRSGWGTASHGSPKSWAIGSLGRFGNEYSGWFDLQLKQRVYNENGKRVDAIVMMDGNVGQQYSTGWFGDNAGGENFMQFSDMYVTTKGFLPFAPEADFWVGKHGAPKIEIQMLDWKTQRTDAAAGVGLENWKVGPGKIDIALVREDVDDYDRSLQNKQQINTNTIDLRYKDIPLWDKVTLMVSGRYVTANESASEKDNQDNNGYYDWKDTWMFGTSLTQKFDKGGFNEFSFLVANNSIASNFGRYAGASPFTTFNGRYYGYHTGGTAVRLTSQGEAYIGDHFIVANAIVYSFGNDIYSYETGAHSDFESIRAVVRPAYIWDQYNQTGVELGYFTQQNKDANSNKFNESGYKTTLFHTFKVNTSMLTSRPEIRFYATYIKALENELDGFTFEDNKDDQFAVGAQAEIWW.

Positions 1-25 (MFRRNIITSAILLMAPLAFSAQSLA) are cleaved as a signal peptide.

The protein belongs to the porin LamB (TC 1.B.3) family.

The protein localises to the cell outer membrane. In terms of biological role, may be a sugar porin with a broad carbohydrate specificity. The sequence is that of Putative outer membrane porin BglH (bglH) from Escherichia coli (strain UTI89 / UPEC).